Reading from the N-terminus, the 978-residue chain is Alanine--tRNA ligase, chloroplastic/mitochondrial (978 aa).

4 residues coordinate Zn(2+): His655, His659, Cys758, and His762. A Glycyl lysine isopeptide (Lys-Gly) (interchain with G-Cter in ubiquitin) cross-link involves residue Lys773.

It belongs to the class-II aminoacyl-tRNA synthetase family. Monomer. Zn(2+) is required as a cofactor.

It is found in the plastid. The protein resides in the chloroplast. The protein localises to the mitochondrion. The enzyme catalyses tRNA(Ala) + L-alanine + ATP = L-alanyl-tRNA(Ala) + AMP + diphosphate. Functionally, catalyzes the attachment of alanine to tRNA(Ala) in a two-step reaction: alanine is first activated by ATP to form Ala-AMP and then transferred to the acceptor end of tRNA(Ala). Also edits incorrectly charged tRNA(Ala) via its editing domain. The chain is Alanine--tRNA ligase, chloroplastic/mitochondrial (EMB86) from Arabidopsis thaliana (Mouse-ear cress).